Consider the following 247-residue polypeptide: Probable transcriptional regulatory protein EUBELI_00902 (247 aa).

It belongs to the TACO1 family.

Its subcellular location is the cytoplasm. In Lachnospira eligens (strain ATCC 27750 / DSM 3376 / VPI C15-48 / C15-B4) (Eubacterium eligens), this protein is Probable transcriptional regulatory protein EUBELI_00902.